Here is a 360-residue protein sequence, read N- to C-terminus: DNA replication and repair protein RecF (360 aa).

33–40 (GENGSGKT) is a binding site for ATP.

Belongs to the RecF family.

The protein localises to the cytoplasm. The RecF protein is involved in DNA metabolism; it is required for DNA replication and normal SOS inducibility. RecF binds preferentially to single-stranded, linear DNA. It also seems to bind ATP. This is DNA replication and repair protein RecF from Rickettsia conorii (strain ATCC VR-613 / Malish 7).